A 396-amino-acid polypeptide reads, in one-letter code: G-protein coupled receptor 84 (396 aa).

Over 1–26 (MWNASDVNFSCYHESVLGYRYVAVSW) the chain is Extracellular. N-linked (GlcNAc...) asparagine glycans are attached at residues Asn-3 and Asn-8. A helical transmembrane segment spans residues 27-47 (GIVVAVTGTVGNVLTLLALAI). Over 48-57 (QPKLRTRFNL) the chain is Cytoplasmic. Residues 58 to 78 (LIANLTVADLLYCTLLQPFSV) traverse the membrane as a helical segment. The Extracellular portion of the chain corresponds to 79-94 (DTYLHLHWRTGATFCQ). The helical transmembrane segment at 95–115 (IFGFLLFVSNSVSILTLCLIA) threads the bilayer. Residues 116–144 (LGRYLLIAHPKLFPQVFSAKGIVLALVST) lie on the Cytoplasmic side of the membrane. Residues 145–165 (WVVAVASFAPLWPIYILVPVV) traverse the membrane as a helical segment. Residues 166–180 (CTCSFDRIRGQPYTT) are Extracellular-facing. The chain crosses the membrane as a helical span at residues 181 to 201 (ILMGIYFVVGLSSVGVFYCLI). Residues 202 to 320 (HQQVKRAAQA…PSEFGKVTRM (119 aa)) are Cytoplasmic-facing. Residues Ser-221 and Ser-224 each carry the phosphoserine modification. The interval 243-310 (SGLASGGPSE…TKGAQRAQDS (68 aa)) is disordered. Residues Thr-263 and Thr-264 each carry the phosphothreonine modification. The chain crosses the membrane as a helical span at residues 321–341 (CFAVFLCFTLSYIPFLLLNIL). The Extracellular portion of the chain corresponds to 342-352 (DAKVQAPRVVH). Residues 353–373 (MLAANLTWLNGCINPVLYAAM) form a helical membrane-spanning segment. The Cytoplasmic portion of the chain corresponds to 374–396 (NRQFRQAYGSLLRRGPQSFHRFH).

The protein belongs to the G-protein coupled receptor 1 family. Interacts with ARRB2 and ARR3. Phosphorylated by a subset of GPR84-activating ligands. Constitutively phosphorylated at Ser-221 and Ser-224 in the absence of 2-HTP. By contrast, Thr-263 and Thr-264 are phosphorylated only following prior cell treatment with 2-HTP.

The protein resides in the cell membrane. Its function is as follows. G protein-coupled receptor that responds endogenously to dietary fatty acids or nutrient, specifically medium-chain free fatty acid (FFA) with carbon chain lengths of C9 to C14. Capric acid (C10:0), undecanoic acid (C11:0) and lauric acid (C12:0) are the most potent agonists. In immune cells, functions as a pro-inflammatory receptor via 6-OAU and promotes the expression of pro-inflammatory mediators such as TNFalpha, IL-6 and IL-12B as well as stimulating chemotactic responses through activation of signaling mediators AKT, ERK and NF-kappa-B. In addition, triggers increased bacterial adhesion and phagocytosis in macrophages and regulates pro-inflammatory function via enhancing NLRP3 inflammasome activation. Also plays an important role in inflammation by modulating neutrophil functions. Mechanistically, promotes neutrophil chemotaxis, reactive oxygen species (ROS) production and degranulation via LYN-AKT/ERK pathway. To regulate ROS, communicates with the two formyl peptide receptors FPR2 and FPR1 to control the NADPH oxidase activity in neutrophils. This is G-protein coupled receptor 84 (GPR84) from Bos taurus (Bovine).